The sequence spans 155 residues: UPF0178 protein mlr0875 (155 aa).

The protein belongs to the UPF0178 family.

The protein is UPF0178 protein mlr0875 of Mesorhizobium japonicum (strain LMG 29417 / CECT 9101 / MAFF 303099) (Mesorhizobium loti (strain MAFF 303099)).